A 229-amino-acid polypeptide reads, in one-letter code: Dolichyldiphosphatase 1 (229 aa).

Transmembrane regions (helical) follow at residues Leu27–Ile47, Met94–Leu114, Phe120–Val140, and Phe156–Ile176.

This sequence belongs to the dolichyldiphosphatase family.

Its subcellular location is the endoplasmic reticulum membrane. The catalysed reaction is a di-trans,poly-cis-dolichyl diphosphate + H2O = a di-trans,poly-cis-dolichyl phosphate + phosphate + H(+). The protein operates within protein modification; protein glycosylation. Required for efficient N-glycosylation. Necessary for maintaining optimal levels of dolichol-linked oligosaccharides. Hydrolyzes dolichyl pyrophosphate at a very high rate and dolichyl monophosphate at a much lower rate. Does not act on phosphatidate. The chain is Dolichyldiphosphatase 1 (dolpp1) from Dictyostelium discoideum (Social amoeba).